Here is a 432-residue protein sequence, read N- to C-terminus: Neuropeptide FF receptor 1 (432 aa).

Residues 1 to 43 (MEAEPSQPPNGSWPLGQNGSDVETSMATSLTFSSYYQHSSPVA) lie on the Extracellular side of the membrane. Asn10 and Asn18 each carry an N-linked (GlcNAc...) asparagine glycan. The chain crosses the membrane as a helical span at residues 44 to 64 (AMFIAAYVLIFLLCMVGNTLV). At 65–80 (CFIVLKNRHMRTVTNM) the chain is on the cytoplasmic side. Residues 81–101 (FILNLAVSDLLVGIFCMPTTL) traverse the membrane as a helical segment. At 102–117 (VDNLITGWPFDNATCK) the chain is on the extracellular side. Asn113 carries N-linked (GlcNAc...) asparagine glycosylation. An intrachain disulfide couples Cys116 to Cys203. A helical membrane pass occupies residues 118–138 (MSGLVQGMSVSASVFTLVAIA). The Cytoplasmic segment spans residues 139 to 158 (VERFRCIVHPFREKLTLRKA). The chain crosses the membrane as a helical span at residues 159-179 (LFTIAVIWALALLIMCPSAVT). Residues 180 to 214 (LTVTREEHHFMLDARNRSYPLYSCWEAWPEKGMRK) lie on the Extracellular side of the membrane. The N-linked (GlcNAc...) asparagine glycan is linked to Asn195. A helical transmembrane segment spans residues 215–235 (VYTAVLFAHIYLVPLALIVVM). Residues 236 to 273 (YVRIARKLCQAPGPARDTEEAVAEGGRTSRRRARVVHM) are Cytoplasmic-facing. A helical membrane pass occupies residues 274-294 (LVMVALFFTLSWLPLWVLLLL). At 295–309 (IDYGELSELQLHLLS) the chain is on the extracellular side. The helical transmembrane segment at 310–330 (VYAFPLAHWLAFFHSSANPII) threads the bilayer. At 331–432 (YGYFNENFRR…MPLTIPAWNI (102 aa)) the chain is on the cytoplasmic side. Low complexity predominate over residues 380–406 (PSDSGLPSESGPSSGVPGPGRLPLRNG). Residues 380 to 422 (PSDSGLPSESGPSSGVPGPGRLPLRNGRVAHQDGPGEGPGCNH) are disordered.

It belongs to the G-protein coupled receptor 1 family. In terms of tissue distribution, expressed at high levels in the hypothalamus. Moderate levels found in the midbrain, thalamus, medulla oblongata, testis, eye, whole brain, cerebral cortex, striatum, hippocampus, cerebellum, optic nerve, placenta, spinal cord, pituitary gland and ovary.

The protein resides in the cell membrane. Its function is as follows. Receptor for NPAF (A-18-F-amide) and NPFF (F-8-F-amide) neuropeptides, also known as morphine-modulating peptides. Can also be activated by a variety of naturally occurring or synthetic FMRF-amide like ligands. This receptor mediates its action by association with G proteins that activate a phosphatidylinositol-calcium second messenger system. In Rattus norvegicus (Rat), this protein is Neuropeptide FF receptor 1 (Npffr1).